Reading from the N-terminus, the 634-residue chain is DNA-directed RNA polymerase subunit gamma (634 aa).

Cys74, Cys76, Cys89, and Cys92 together coordinate Zn(2+). Residues Asp471, Asp473, and Asp475 each coordinate Mg(2+).

It belongs to the RNA polymerase beta' chain family. RpoC1 subfamily. As to quaternary structure, in cyanobacteria the RNAP catalytic core is composed of 2 alpha, 1 beta, 1 beta', 1 gamma and 1 omega subunit. When a sigma factor is associated with the core the holoenzyme is formed, which can initiate transcription. The cofactor is Mg(2+). Zn(2+) is required as a cofactor.

The catalysed reaction is RNA(n) + a ribonucleoside 5'-triphosphate = RNA(n+1) + diphosphate. Functionally, DNA-dependent RNA polymerase catalyzes the transcription of DNA into RNA using the four ribonucleoside triphosphates as substrates. This Parasynechococcus marenigrum (strain WH8102) protein is DNA-directed RNA polymerase subunit gamma.